The sequence spans 168 residues: tRNA-splicing endonuclease subunit Sen15 (168 aa).

Residues 1–32 (MEERSDSEPTPGCSGPGPAPVRDGGGAHTWAP) form a disordered region. Residues S7 and S165 each carry the phosphoserine modification.

The protein belongs to the SEN15 family. As to quaternary structure, homodimer. tRNA splicing endonuclease is a heterotetramer composed of TSEN2, TSEN15, TSEN34/LENG5 and TSEN54. tRNA splicing endonuclease complex also contains proteins of the pre-mRNA 3' end processing machinery such as CLP1, CPSF1, CPSF4 and CSTF2.

It is found in the nucleus. It localises to the nucleolus. In terms of biological role, non-catalytic subunit of the tRNA-splicing endonuclease complex, a complex responsible for identification and cleavage of the splice sites in pre-tRNA. It cleaves pre-tRNA at the 5' and 3' splice sites to release the intron. The products are an intron and two tRNA half-molecules bearing 2',3' cyclic phosphate and 5'-OH termini. There are no conserved sequences at the splice sites, but the intron is invariably located at the same site in the gene, placing the splice sites an invariant distance from the constant structural features of the tRNA body. The tRNA splicing endonuclease is also involved in mRNA processing via its association with pre-mRNA 3'-end processing factors, establishing a link between pre-tRNA splicing and pre-mRNA 3'-end formation, suggesting that the endonuclease subunits function in multiple RNA-processing events. This chain is tRNA-splicing endonuclease subunit Sen15 (Tsen15), found in Mus musculus (Mouse).